Consider the following 278-residue polypeptide: UPF0276 protein Sama_1305 (278 aa).

The protein belongs to the UPF0276 family.

This Shewanella amazonensis (strain ATCC BAA-1098 / SB2B) protein is UPF0276 protein Sama_1305.